A 128-amino-acid polypeptide reads, in one-letter code: Nucleoside diphosphate kinase B (128 aa).

Position 1 is an N-acetylmethionine (M1). The ATP site is built by K9, F39, T70, R81, and N91. H94 serves as the catalytic Pros-phosphohistidine intermediate.

It belongs to the NDK family. It depends on Mg(2+) as a cofactor.

The protein localises to the cytoplasm. The protein resides in the nucleus. Its subcellular location is the cell projection. It is found in the lamellipodium. It localises to the ruffle. It carries out the reaction a 2'-deoxyribonucleoside 5'-diphosphate + ATP = a 2'-deoxyribonucleoside 5'-triphosphate + ADP. The enzyme catalyses a ribonucleoside 5'-diphosphate + ATP = a ribonucleoside 5'-triphosphate + ADP. Major role in the synthesis of nucleoside triphosphates other than ATP. This chain is Nucleoside diphosphate kinase B (nme2), found in Merluccius australis australis (Austral hake).